The following is a 322-amino-acid chain: Ribonuclease Z (322 aa).

Zn(2+) contacts are provided by His-60, His-62, Asp-64, His-65, His-140, Asp-210, and His-270. Catalysis depends on Asp-64, which acts as the Proton acceptor.

Belongs to the RNase Z family. As to quaternary structure, homodimer. It depends on Zn(2+) as a cofactor.

It catalyses the reaction Endonucleolytic cleavage of RNA, removing extra 3' nucleotides from tRNA precursor, generating 3' termini of tRNAs. A 3'-hydroxy group is left at the tRNA terminus and a 5'-phosphoryl group is left at the trailer molecule.. Its function is as follows. Zinc phosphodiesterase, which displays some tRNA 3'-processing endonuclease activity. Probably involved in tRNA maturation, by removing a 3'-trailer from precursor tRNA. This Methanococcus aeolicus (strain ATCC BAA-1280 / DSM 17508 / OCM 812 / Nankai-3) protein is Ribonuclease Z.